The primary structure comprises 217 residues: 3,4-dihydroxy-2-butanone 4-phosphate synthase (217 aa).

D-ribulose 5-phosphate-binding positions include 37 to 38 (RE), Asp42, 150 to 154 (RGGHT), and Glu174. Residue Glu38 coordinates Mg(2+). His153 lines the Mg(2+) pocket.

It belongs to the DHBP synthase family. In terms of assembly, homodimer. It depends on Mg(2+) as a cofactor. Mn(2+) serves as cofactor.

It catalyses the reaction D-ribulose 5-phosphate = (2S)-2-hydroxy-3-oxobutyl phosphate + formate + H(+). The protein operates within cofactor biosynthesis; riboflavin biosynthesis; 2-hydroxy-3-oxobutyl phosphate from D-ribulose 5-phosphate: step 1/1. Functionally, catalyzes the conversion of D-ribulose 5-phosphate to formate and 3,4-dihydroxy-2-butanone 4-phosphate. This is 3,4-dihydroxy-2-butanone 4-phosphate synthase from Escherichia coli O127:H6 (strain E2348/69 / EPEC).